The primary structure comprises 82 residues: Small ribosomal subunit protein bS16 (82 aa).

This sequence belongs to the bacterial ribosomal protein bS16 family.

The protein is Small ribosomal subunit protein bS16 of Edwardsiella ictaluri (strain 93-146).